The primary structure comprises 243 residues: Orotidine 5'-phosphate decarboxylase (243 aa).

Substrate-binding positions include D16, K38, 65–74 (DLKLHDIPNT), T120, R181, Q190, G210, and R211. K67 acts as the Proton donor in catalysis.

This sequence belongs to the OMP decarboxylase family. Type 1 subfamily. Homodimer.

It carries out the reaction orotidine 5'-phosphate + H(+) = UMP + CO2. The protein operates within pyrimidine metabolism; UMP biosynthesis via de novo pathway; UMP from orotate: step 2/2. Its function is as follows. Catalyzes the decarboxylation of orotidine 5'-monophosphate (OMP) to uridine 5'-monophosphate (UMP). The protein is Orotidine 5'-phosphate decarboxylase of Bradyrhizobium sp. (strain BTAi1 / ATCC BAA-1182).